We begin with the raw amino-acid sequence, 89 residues long: Small ribosomal subunit protein uS15 (89 aa).

This sequence belongs to the universal ribosomal protein uS15 family. In terms of assembly, part of the 30S ribosomal subunit. Forms a bridge to the 50S subunit in the 70S ribosome, contacting the 23S rRNA.

Its function is as follows. One of the primary rRNA binding proteins, it binds directly to 16S rRNA where it helps nucleate assembly of the platform of the 30S subunit by binding and bridging several RNA helices of the 16S rRNA. In terms of biological role, forms an intersubunit bridge (bridge B4) with the 23S rRNA of the 50S subunit in the ribosome. This Pseudoalteromonas atlantica (strain T6c / ATCC BAA-1087) protein is Small ribosomal subunit protein uS15.